The sequence spans 268 residues: Ubiquinone biosynthesis protein COQ4 homolog, mitochondrial (268 aa).

Residues H171, D172, H175, and E187 each coordinate Zn(2+).

This sequence belongs to the COQ4 family. In terms of assembly, component of a multi-subunit COQ enzyme complex. It depends on Zn(2+) as a cofactor.

The protein localises to the mitochondrion inner membrane. The catalysed reaction is a 4-hydroxy-3-methoxy-5-(all-trans-polyprenyl)benzoate + H(+) = a 2-methoxy-6-(all-trans-polyprenyl)phenol + CO2. The protein operates within cofactor biosynthesis; ubiquinone biosynthesis. Its function is as follows. Lyase that catalyzes the C1-decarboxylation of 4-hydroxy-3-methoxy-5-(all-trans-polyprenyl)benzoic acid into 2-methoxy-6-(all-trans-polyprenyl)phenol during ubiquinone biosynthesis. In Drosophila erecta (Fruit fly), this protein is Ubiquinone biosynthesis protein COQ4 homolog, mitochondrial.